Here is a 299-residue protein sequence, read N- to C-terminus: Protease HtpX homolog (299 aa).

2 consecutive transmembrane segments (helical) span residues 14–34 (ILVMAGFVFLVALIGAAVGYL) and 39–59 (ATGGVIIALVIAVIYVSIMVG). A Zn(2+)-binding site is contributed by histidine 144. Glutamate 145 is an active-site residue. Histidine 148 is a Zn(2+) binding site. 2 helical membrane-spanning segments follow: residues 159-179 (IALALTAAISLLVNFAGNFMW) and 196-216 (VFAIIGSILLIILAPLAATMV). Residue glutamate 225 participates in Zn(2+) binding.

The protein belongs to the peptidase M48B family. Requires Zn(2+) as cofactor.

It is found in the cell membrane. In Limosilactobacillus fermentum (strain NBRC 3956 / LMG 18251) (Lactobacillus fermentum), this protein is Protease HtpX homolog.